The sequence spans 374 residues: Glutamate 5-kinase (374 aa).

ATP is bound at residue Lys9. Residues Ser49, Asp136, and Asn148 each contribute to the substrate site. Residues 168 to 169 (TD) and 210 to 216 (TGGMRSK) each bind ATP. Positions 276-354 (AGMITVDSGA…EEARQYSYLH (79 aa)) constitute a PUA domain.

It belongs to the glutamate 5-kinase family.

It localises to the cytoplasm. The catalysed reaction is L-glutamate + ATP = L-glutamyl 5-phosphate + ADP. It functions in the pathway amino-acid biosynthesis; L-proline biosynthesis; L-glutamate 5-semialdehyde from L-glutamate: step 1/2. Functionally, catalyzes the transfer of a phosphate group to glutamate to form L-glutamate 5-phosphate. The protein is Glutamate 5-kinase of Geobacillus kaustophilus (strain HTA426).